Consider the following 464-residue polypeptide: 26S proteasome regulatory subunit 7 homolog B (464 aa).

246–253 (GPPGSGKT) is a binding site for ATP. A Glycyl lysine isopeptide (Lys-Gly) (interchain with G-Cter in ubiquitin) cross-link involves residue Lys452.

It belongs to the AAA ATPase family. Component of the 19S regulatory particle (RP/PA700) base subcomplex of the 26S proteasome. The 26S proteasome is composed of a core protease (CP), known as the 20S proteasome, capped at one or both ends by the 19S regulatory particle (RP/PA700). The RP/PA700 complex is composed of at least 17 different subunits in two subcomplexes, the base and the lid, which form the portions proximal and distal to the 20S proteolytic core, respectively.

The protein resides in the cytoplasm. It is found in the nucleus. Its function is as follows. The 26S proteasome is involved in the ATP-dependent degradation of ubiquitinated proteins. The regulatory (or ATPase) complex confers ATP dependency and substrate specificity to the 26S complex. This is 26S proteasome regulatory subunit 7 homolog B (RPT1B) from Arabidopsis thaliana (Mouse-ear cress).